Reading from the N-terminus, the 669-residue chain is DNA ligase (669 aa).

Residues 34–38, 83–84, and Glu-114 each bind NAD(+); these read DAEYD and SL. Catalysis depends on Lys-116, which acts as the N6-AMP-lysine intermediate. 4 residues coordinate NAD(+): Arg-137, Glu-171, Lys-287, and Lys-311. Cys-405, Cys-408, Cys-423, and Cys-428 together coordinate Zn(2+). Residues 591-669 enclose the BRCT domain; the sequence is NVESYFAGKT…EERFLQELNK (79 aa).

This sequence belongs to the NAD-dependent DNA ligase family. LigA subfamily. Mg(2+) serves as cofactor. It depends on Mn(2+) as a cofactor.

The catalysed reaction is NAD(+) + (deoxyribonucleotide)n-3'-hydroxyl + 5'-phospho-(deoxyribonucleotide)m = (deoxyribonucleotide)n+m + AMP + beta-nicotinamide D-nucleotide.. In terms of biological role, DNA ligase that catalyzes the formation of phosphodiester linkages between 5'-phosphoryl and 3'-hydroxyl groups in double-stranded DNA using NAD as a coenzyme and as the energy source for the reaction. It is essential for DNA replication and repair of damaged DNA. In Bacillus cereus (strain AH820), this protein is DNA ligase.